A 135-amino-acid polypeptide reads, in one-letter code: Calcium-binding protein KIC (135 aa).

The EF-hand domain occupies 74-109; that stretch reads MSKEDAQGMVREGDLDGDGALNQTEFCVLMVRLSPE. Ca(2+) is bound by residues D87, D89, D91, and E98.

As to quaternary structure, interacts with KCBP (via C-terminus). KIC and calmodulin show competitive binding to KCBP. Interacts with CML42. Binds to ABCG36. As to expression, expressed in stems, leaves and flowers.

In terms of biological role, calcium-binding regulatory protein that interacts with kinesin motor protein KCBP in a calcium-dependent manner. Inhibits KCBP microtubule binding activity and microtubule-stimulated ATPase activity. Involved in the regulation of trichome branching through its interaction with KCBP. The chain is Calcium-binding protein KIC from Arabidopsis thaliana (Mouse-ear cress).